We begin with the raw amino-acid sequence, 467 residues long: Chromosomal replication initiator protein DnaA (467 aa).

The domain I, interacts with DnaA modulators stretch occupies residues 1–85; sequence MTTTLWPQVL…LEVGEYAIES (85 aa). The interval 85 to 130 is domain II; that stretch reads SFNEPENTSVPQPLRETKAEREAAEKAASSTSKKKSDSPPKKTIKH. Positions 87–129 are disordered; it reads NEPENTSVPQPLRETKAEREAAEKAASSTSKKKSDSPPKKTIK. Basic and acidic residues predominate over residues 99–109; it reads RETKAEREAAE. Residues 131 to 347 form a domain III, AAA+ region region; it reads NLNTNFTFDT…GALKRVGAFA (217 aa). Residues Gly-175, Gly-177, Lys-178, and Thr-179 each contribute to the ATP site. The segment at 348–467 is domain IV, binds dsDNA; that stretch reads QFTQQLVTVD…FNSLIRIITN (120 aa).

Belongs to the DnaA family. Oligomerizes as a right-handed, spiral filament on DNA at oriC.

The protein localises to the cytoplasm. Its function is as follows. Plays an essential role in the initiation and regulation of chromosomal replication. ATP-DnaA binds to the origin of replication (oriC) to initiate formation of the DNA replication initiation complex once per cell cycle. Binds the DnaA box (a 9 base pair repeat at the origin) and separates the double-stranded (ds)DNA. Forms a right-handed helical filament on oriC DNA; dsDNA binds to the exterior of the filament while single-stranded (ss)DNA is stabiized in the filament's interior. The ATP-DnaA-oriC complex binds and stabilizes one strand of the AT-rich DNA unwinding element (DUE), permitting loading of DNA polymerase. After initiation quickly degrades to an ADP-DnaA complex that is not apt for DNA replication. Binds acidic phospholipids. In Hydrogenovibrio crunogenus (strain DSM 25203 / XCL-2) (Thiomicrospira crunogena), this protein is Chromosomal replication initiator protein DnaA.